We begin with the raw amino-acid sequence, 88 residues long: Sec-independent protein translocase protein TatA (88 aa).

The helical transmembrane segment at 1-21 (MGSIGWAQLLIIAVIVVLLFG) threads the bilayer. Residues 41-88 (KAMGDDSQTPPTNVDKTSNDADFAKSITEKQQPVAKAEESKSHEKEQG) form a disordered region. The segment covering 46-56 (DSQTPPTNVDK) has biased composition (polar residues). A compositionally biased stretch (basic and acidic residues) spans 76-88 (KAEESKSHEKEQG).

Belongs to the TatA/E family. In terms of assembly, the Tat system comprises two distinct complexes: a TatABC complex, containing multiple copies of TatA, TatB and TatC subunits, and a separate TatA complex, containing only TatA subunits. Substrates initially bind to the TatABC complex, which probably triggers association of the separate TatA complex to form the active translocon.

Its subcellular location is the cell inner membrane. Part of the twin-arginine translocation (Tat) system that transports large folded proteins containing a characteristic twin-arginine motif in their signal peptide across membranes. TatA could form the protein-conducting channel of the Tat system. This chain is Sec-independent protein translocase protein TatA, found in Yersinia pestis.